Reading from the N-terminus, the 111-residue chain is UPF0145 protein RBAM_010660 (111 aa).

Belongs to the UPF0145 family.

In Bacillus velezensis (strain DSM 23117 / BGSC 10A6 / LMG 26770 / FZB42) (Bacillus amyloliquefaciens subsp. plantarum), this protein is UPF0145 protein RBAM_010660.